The primary structure comprises 176 residues: Tumor necrosis factor receptor superfamily member 23 (176 aa).

The signal sequence occupies residues M1–A29. TNFR-Cys repeat units follow at residues N37–C72, K74–C114, and E115–C155. 9 disulfide bridges follow: C38/C49, C50/C63, C53/C72, C75/C90, C93/C106, C96/C114, C116/C131, C134/C147, and C137/C155. N-linked (GlcNAc...) asparagine glycosylation occurs at N148. C155 carries GPI-anchor amidated cysteine lipidation. A propeptide spans S156–I176 (removed in mature form).

In terms of tissue distribution, ubiquitous.

The protein localises to the cell membrane. In terms of biological role, receptor for the cytotoxic ligand TRAIL. Lacks a cytoplasmic death domain and hence is not capable of inducing apoptosis. May protect cells against TRAIL mediated apoptosis through ligand competition. Cannot induce the NF-kappa-B pathway. The chain is Tumor necrosis factor receptor superfamily member 23 (Tnfrsf23) from Mus musculus (Mouse).